Here is a 169-residue protein sequence, read N- to C-terminus: Chorismate pyruvate-lyase (169 aa).

4 residues coordinate substrate: Met35, Arg77, Leu115, and Glu156.

This sequence belongs to the UbiC family. Monomer.

The protein resides in the cytoplasm. The enzyme catalyses chorismate = 4-hydroxybenzoate + pyruvate. It participates in cofactor biosynthesis; ubiquinone biosynthesis. Functionally, removes the pyruvyl group from chorismate, with concomitant aromatization of the ring, to provide 4-hydroxybenzoate (4HB) for the ubiquinone pathway. In Cronobacter sakazakii (strain ATCC BAA-894) (Enterobacter sakazakii), this protein is Chorismate pyruvate-lyase.